Consider the following 61-residue polypeptide: Small venom protein 1 (61 aa).

The first 20 residues, 1-20 (MRCVAIFLVVICAFVLQALA), serve as a signal peptide directing secretion.

Expressed by the venom gland.

It localises to the secreted. The polypeptide is Small venom protein 1 (Pimpla hypochondriaca (Parasitoid wasp)).